Consider the following 410-residue polypeptide: Tryptophan synthase beta chain (410 aa).

Lys-104 carries the N6-(pyridoxal phosphate)lysine modification.

The protein belongs to the TrpB family. As to quaternary structure, tetramer of two alpha and two beta chains. Pyridoxal 5'-phosphate is required as a cofactor.

It carries out the reaction (1S,2R)-1-C-(indol-3-yl)glycerol 3-phosphate + L-serine = D-glyceraldehyde 3-phosphate + L-tryptophan + H2O. Its pathway is amino-acid biosynthesis; L-tryptophan biosynthesis; L-tryptophan from chorismate: step 5/5. Functionally, the beta subunit is responsible for the synthesis of L-tryptophan from indole and L-serine. The polypeptide is Tryptophan synthase beta chain (Thermosynechococcus vestitus (strain NIES-2133 / IAM M-273 / BP-1)).